The chain runs to 130 residues: Secreted RxLR effector protein 68 (130 aa).

Positions 1 to 29 are cleaved as a signal peptide; that stretch reads MRCVCASIRRTRIIEFLMFFALSSSTASC. Asparagine 36 carries N-linked (GlcNAc...) asparagine glycosylation. The RxLR motif lies at 45–48; sequence RWLR.

The protein belongs to the RxLR effector family.

Its subcellular location is the secreted. It localises to the host cytoplasm. The protein localises to the host nucleus. Effector that acts as a broad suppressor of cell death to interrupt plant immunity. Inhibits cell death induced by cell death-inducing proteins, including the PAMP elicitor INF1 from P.infestans. The chain is Secreted RxLR effector protein 68 from Plasmopara viticola (Downy mildew of grapevine).